A 175-amino-acid chain; its full sequence is Large ribosomal subunit protein uL10 (175 aa).

The protein belongs to the universal ribosomal protein uL10 family. Part of the ribosomal stalk of the 50S ribosomal subunit. The N-terminus interacts with L11 and the large rRNA to form the base of the stalk. The C-terminus forms an elongated spine to which L12 dimers bind in a sequential fashion forming a multimeric L10(L12)X complex.

Its function is as follows. Forms part of the ribosomal stalk, playing a central role in the interaction of the ribosome with GTP-bound translation factors. The protein is Large ribosomal subunit protein uL10 of Methylobacterium sp. (strain 4-46).